Reading from the N-terminus, the 975-residue chain is Probable outer membrane protein PmpA (975 aa).

Residues methionine 1–alanine 51 form the signal peptide. An Autotransporter domain is found at arginine 699–phenylalanine 975.

It belongs to the PMP outer membrane protein family.

The protein resides in the secreted. It is found in the cell wall. It localises to the cell outer membrane. In Chlamydia trachomatis serovar D (strain ATCC VR-885 / DSM 19411 / UW-3/Cx), this protein is Probable outer membrane protein PmpA (pmpA).